The primary structure comprises 91 residues: Ribonuclease P protein component 4 (91 aa).

4 residues coordinate Zn(2+): cysteine 48, cysteine 51, cysteine 71, and cysteine 74.

This sequence belongs to the eukaryotic/archaeal RNase P protein component 4 family. In terms of assembly, consists of a catalytic RNA component and at least 4-5 protein subunits. Zn(2+) is required as a cofactor.

It localises to the cytoplasm. The enzyme catalyses Endonucleolytic cleavage of RNA, removing 5'-extranucleotides from tRNA precursor.. Part of ribonuclease P, a protein complex that generates mature tRNA molecules by cleaving their 5'-ends. The chain is Ribonuclease P protein component 4 from Picrophilus torridus (strain ATCC 700027 / DSM 9790 / JCM 10055 / NBRC 100828 / KAW 2/3).